The following is a 347-amino-acid chain: Probable arabinogalactan endo-beta-1,4-galactanase A (347 aa).

The first 16 residues, 1-16, serve as a signal peptide directing secretion; it reads MLFSYLLATLPLLANA. Residue E150 is the Proton donor of the active site. The active-site Nucleophile is E260.

It belongs to the glycosyl hydrolase 53 family.

The protein resides in the secreted. It catalyses the reaction The enzyme specifically hydrolyzes (1-&gt;4)-beta-D-galactosidic linkages in type I arabinogalactans.. Endogalactanase involved in the degradation of plant cell wall polysaccharides, and more particularly of hairy regions of pectin. The chain is Probable arabinogalactan endo-beta-1,4-galactanase A (galA) from Aspergillus flavus (strain ATCC 200026 / FGSC A1120 / IAM 13836 / NRRL 3357 / JCM 12722 / SRRC 167).